The chain runs to 170 residues: MSETGPSLQRPATRAARLSAIEQALATHIITSQSQLSKILIDEGIAVTQATLSRDLDEMHAVKTRLKDGTVAYAVGRSVVASEGEDVGERGEAQMSRVLNGLVTSVAAAGNLVVVHTPSGAAQYVASVIDKQPIEGVLGTIAGDDTVMVICTNDDTAVSRSDWLLSLASK.

Belongs to the ArgR family.

Its subcellular location is the cytoplasm. Its pathway is amino-acid biosynthesis; L-arginine biosynthesis [regulation]. Functionally, regulates arginine biosynthesis genes. The sequence is that of Arginine repressor from Bifidobacterium longum (strain DJO10A).